The primary structure comprises 406 residues: Multifunctional CCA protein (406 aa).

G8 and R11 together coordinate ATP. CTP-binding residues include G8 and R11. 2 residues coordinate Mg(2+): E21 and D23. ATP is bound by residues R91, R137, and R140. The CTP site is built by R91, R137, and R140. Residues 225-326 enclose the HD domain; the sequence is TGIHTLKVLE…LKLLNRVDAF (102 aa).

This sequence belongs to the tRNA nucleotidyltransferase/poly(A) polymerase family. Bacterial CCA-adding enzyme type 1 subfamily. Monomer. Can also form homodimers and oligomers. The cofactor is Mg(2+). Ni(2+) is required as a cofactor.

The catalysed reaction is a tRNA precursor + 2 CTP + ATP = a tRNA with a 3' CCA end + 3 diphosphate. It catalyses the reaction a tRNA with a 3' CCA end + 2 CTP + ATP = a tRNA with a 3' CCACCA end + 3 diphosphate. Catalyzes the addition and repair of the essential 3'-terminal CCA sequence in tRNAs without using a nucleic acid template. Adds these three nucleotides in the order of C, C, and A to the tRNA nucleotide-73, using CTP and ATP as substrates and producing inorganic pyrophosphate. tRNA 3'-terminal CCA addition is required both for tRNA processing and repair. Also involved in tRNA surveillance by mediating tandem CCA addition to generate a CCACCA at the 3' terminus of unstable tRNAs. While stable tRNAs receive only 3'-terminal CCA, unstable tRNAs are marked with CCACCA and rapidly degraded. This is Multifunctional CCA protein from Nitrosococcus oceani (strain ATCC 19707 / BCRC 17464 / JCM 30415 / NCIMB 11848 / C-107).